The chain runs to 284 residues: Acetylglutamate kinase (284 aa).

Residues 66 to 67 (GG), Arg-88, and Asn-179 each bind substrate.

It belongs to the acetylglutamate kinase family. ArgB subfamily.

It is found in the cytoplasm. It carries out the reaction N-acetyl-L-glutamate + ATP = N-acetyl-L-glutamyl 5-phosphate + ADP. It functions in the pathway amino-acid biosynthesis; L-arginine biosynthesis; N(2)-acetyl-L-ornithine from L-glutamate: step 2/4. Its function is as follows. Catalyzes the ATP-dependent phosphorylation of N-acetyl-L-glutamate. In Actinobacillus pleuropneumoniae serotype 3 (strain JL03), this protein is Acetylglutamate kinase.